A 294-amino-acid polypeptide reads, in one-letter code: 4-diphosphocytidyl-2-C-methyl-D-erythritol kinase (294 aa).

K15 is an active-site residue. 101–111 provides a ligand contact to ATP; that stretch reads PSEAGLGGGSS. Residue D143 is part of the active site.

It belongs to the GHMP kinase family. IspE subfamily.

It carries out the reaction 4-CDP-2-C-methyl-D-erythritol + ATP = 4-CDP-2-C-methyl-D-erythritol 2-phosphate + ADP + H(+). It functions in the pathway isoprenoid biosynthesis; isopentenyl diphosphate biosynthesis via DXP pathway; isopentenyl diphosphate from 1-deoxy-D-xylulose 5-phosphate: step 3/6. Its function is as follows. Catalyzes the phosphorylation of the position 2 hydroxy group of 4-diphosphocytidyl-2C-methyl-D-erythritol. This is 4-diphosphocytidyl-2-C-methyl-D-erythritol kinase from Fusobacterium nucleatum subsp. nucleatum (strain ATCC 25586 / DSM 15643 / BCRC 10681 / CIP 101130 / JCM 8532 / KCTC 2640 / LMG 13131 / VPI 4355).